The sequence spans 361 residues: GDSL esterase/lipase At4g18970 (361 aa).

The first 22 residues, 1–22 (MARVCVMMMAMAIAMAMNIAMG), serve as a signal peptide directing secretion. Ser-35 acts as the Nucleophile in catalysis. Active-site residues include Asp-325 and His-328.

The protein belongs to the 'GDSL' lipolytic enzyme family.

Its subcellular location is the secreted. This chain is GDSL esterase/lipase At4g18970, found in Arabidopsis thaliana (Mouse-ear cress).